Consider the following 364-residue polypeptide: Large ribosomal subunit protein uL22m (364 aa).

The protein belongs to the universal ribosomal protein uL22 family. Component of the mitochondrial large ribosomal subunit (mt-LSU). Mature N.crassa 74S mitochondrial ribosomes consist of a small (37S) and a large (54S) subunit. The 37S small subunit contains a 16S ribosomal RNA (16S mt-rRNA) and 32 different proteins. The 54S large subunit contains a 23S rRNA (23S mt-rRNA) and 42 different proteins. uL22m forms the wall of the exit tunnel.

It localises to the mitochondrion. Component of the mitochondrial ribosome (mitoribosome), a dedicated translation machinery responsible for the synthesis of mitochondrial genome-encoded proteins, including at least some of the essential transmembrane subunits of the mitochondrial respiratory chain. The mitoribosomes are attached to the mitochondrial inner membrane and translation products are cotranslationally integrated into the membrane. The chain is Large ribosomal subunit protein uL22m (mrpl22) from Neurospora crassa (strain ATCC 24698 / 74-OR23-1A / CBS 708.71 / DSM 1257 / FGSC 987).